The following is a 450-amino-acid chain: Phosphoglucosamine mutase (450 aa).

Residue serine 97 is the Phosphoserine intermediate of the active site. Residues serine 97, aspartate 236, aspartate 238, and aspartate 240 each coordinate Mg(2+). Serine 97 carries the phosphoserine modification.

The protein belongs to the phosphohexose mutase family. Mg(2+) serves as cofactor. In terms of processing, activated by phosphorylation.

It catalyses the reaction alpha-D-glucosamine 1-phosphate = D-glucosamine 6-phosphate. Its function is as follows. Catalyzes the conversion of glucosamine-6-phosphate to glucosamine-1-phosphate. The protein is Phosphoglucosamine mutase of Prochlorococcus marinus (strain MIT 9312).